Here is a 343-residue protein sequence, read N- to C-terminus: DNA-directed RNA polymerase subunit alpha (343 aa).

Residues 1–236 (MQEHYYKFWR…EQLQIFLTFD (236 aa)) are alpha N-terminal domain (alpha-NTD). Residues 253-343 (LNENLFRSVD…QPPQKRETQQ (91 aa)) form an alpha C-terminal domain (alpha-CTD) region.

It belongs to the RNA polymerase alpha chain family. In terms of assembly, homodimer. The RNAP catalytic core consists of 2 alpha, 1 beta, 1 beta' and 1 omega subunit. When a sigma factor is associated with the core the holoenzyme is formed, which can initiate transcription.

It catalyses the reaction RNA(n) + a ribonucleoside 5'-triphosphate = RNA(n+1) + diphosphate. DNA-dependent RNA polymerase catalyzes the transcription of DNA into RNA using the four ribonucleoside triphosphates as substrates. This chain is DNA-directed RNA polymerase subunit alpha, found in Bdellovibrio bacteriovorus (strain ATCC 15356 / DSM 50701 / NCIMB 9529 / HD100).